A 172-amino-acid polypeptide reads, in one-letter code: Large ribosomal subunit protein bL21m (172 aa).

The transit peptide at 1–20 (MIRNIGSNLMKSSSSILLRN) directs the protein to the mitochondrion.

This sequence belongs to the bacterial ribosomal protein bL21 family.

The protein resides in the mitochondrion. The chain is Large ribosomal subunit protein bL21m (mrpl21) from Dictyostelium discoideum (Social amoeba).